Here is a 561-residue protein sequence, read N- to C-terminus: uncharacterized protein (561 aa).

Over residues 1 to 11 (MSQVSLPSQLK) the composition is skewed to polar residues. Disordered regions lie at residues 1 to 22 (MSQVSLPSQLKETGPRLQSRCR) and 522 to 561 (CSLPQSSPDPVPDGSPRPKQQPQQAQAEQAQQPQQQIMLP). The segment covering 541-561 (QQPQQAQAEQAQQPQQQIMLP) has biased composition (low complexity).

The protein to Synechocystis PCC 6803 sll0335 and to M.tuberculosis Rv2567.

This is an uncharacterized protein from Mycobacterium leprae (strain TN).